The sequence spans 474 residues: MSRLVVVSNRIAPPDEHAASAGGLAVGILGALKAAGGLWFGWSGETGNEDQPLKKVKKGNITWASFNLSEQDLDEYYNKFSNAVLWPAFHYRLDLVQFQRPAWDGYLRVNALLADKLLPLLQDDDIIWIHDYHLLPFAHELRKRGVNNRIGFFLHIPFPTPEIFNALPTYDTLLEQLCDYDLLGFQTENDRLAFLDCLSNLTRVTTRSAKSHTACGKAFRTEVYPIGIEPKEIAKQAAGPLPPKLAQLKAELKNVQNIFSVERLDYSKGLPERFLAYEALLEKYPQHHGKIRYTQIAPTSRGDVQAYQDIRHQLENEAGRINGKYGQLGWTPLYYLNQHFDRKLLMKIFRYSDVGLVTPLRDGMNLVAKEYVAAQDPANPGVLVLSQFAGAANELTSALIVNPYDRDEVAAALDRALTMSLAERISRHAEMLDVIVKNDINHWQECFISDLKQIVPRSAESQQRDKVATFPKLA.

Arg-10 is a binding site for D-glucose 6-phosphate. Residue 22 to 23 (GG) coordinates UDP-alpha-D-glucose. Residues Tyr-77 and Asp-131 each coordinate D-glucose 6-phosphate. UDP-alpha-D-glucose contacts are provided by Arg-263 and Lys-268. Arg-301 is a D-glucose 6-phosphate binding site. Residues Phe-340 and 366-370 (LVAKE) contribute to the UDP-alpha-D-glucose site.

It belongs to the glycosyltransferase 20 family. In terms of assembly, homotetramer.

It carries out the reaction D-glucose 6-phosphate + UDP-alpha-D-glucose = alpha,alpha-trehalose 6-phosphate + UDP + H(+). It functions in the pathway glycan biosynthesis; trehalose biosynthesis. Its function is as follows. Probably involved in the osmoprotection via the biosynthesis of trehalose. Catalyzes the transfer of glucose from UDP-alpha-D-glucose (UDP-Glc) to D-glucose 6-phosphate (Glc-6-P) to form trehalose-6-phosphate. Acts with retention of the anomeric configuration of the UDP-sugar donor. The sequence is that of Trehalose-6-phosphate synthase from Escherichia coli O6:K15:H31 (strain 536 / UPEC).